The sequence spans 417 residues: Serine hydroxymethyltransferase (417 aa).

Residues leucine 112 and 116-118 (GHL) contribute to the (6S)-5,6,7,8-tetrahydrofolate site. The residue at position 221 (lysine 221) is an N6-(pyridoxal phosphate)lysine. Glutamate 247 is a (6S)-5,6,7,8-tetrahydrofolate binding site.

Belongs to the SHMT family. As to quaternary structure, homodimer. Pyridoxal 5'-phosphate is required as a cofactor.

It is found in the cytoplasm. The enzyme catalyses (6R)-5,10-methylene-5,6,7,8-tetrahydrofolate + glycine + H2O = (6S)-5,6,7,8-tetrahydrofolate + L-serine. It functions in the pathway one-carbon metabolism; tetrahydrofolate interconversion. The protein operates within amino-acid biosynthesis; glycine biosynthesis; glycine from L-serine: step 1/1. Catalyzes the reversible interconversion of serine and glycine with tetrahydrofolate (THF) serving as the one-carbon carrier. This reaction serves as the major source of one-carbon groups required for the biosynthesis of purines, thymidylate, methionine, and other important biomolecules. Also exhibits THF-independent aldolase activity toward beta-hydroxyamino acids, producing glycine and aldehydes, via a retro-aldol mechanism. The sequence is that of Serine hydroxymethyltransferase from Borrelia garinii subsp. bavariensis (strain ATCC BAA-2496 / DSM 23469 / PBi) (Borreliella bavariensis).